We begin with the raw amino-acid sequence, 173 residues long: Endoribonuclease YbeY (173 aa).

Residues histidine 126, histidine 130, and histidine 136 each coordinate Zn(2+).

This sequence belongs to the endoribonuclease YbeY family. Zn(2+) serves as cofactor.

The protein localises to the cytoplasm. Its function is as follows. Single strand-specific metallo-endoribonuclease involved in late-stage 70S ribosome quality control and in maturation of the 3' terminus of the 16S rRNA. The sequence is that of Endoribonuclease YbeY from Sinorhizobium fredii (strain NBRC 101917 / NGR234).